A 41-amino-acid chain; its full sequence is Pi-stichotoxin-Hcr5b (41 aa).

Intrachain disulfides connect cysteine 4–cysteine 37, cysteine 6–cysteine 30, and cysteine 20–cysteine 38.

Belongs to the sea anemone type 3 (BDS) potassium channel toxin family.

Its subcellular location is the secreted. It localises to the nematocyst. Its function is as follows. Remarkably non-selective toxin, with activity on many different ion channels. Weakly and reversibly inhibits rat and human homomeric ASIC1 (isoform ASIC1a) (IC(50)=4.8 uM, and IC(50)=14.6 uM), and ASIC3 (IC(50)=15.9 uM). Molecular modeling interaction with ASIC1a suggests that this peptide hinders the collapse of acidic pockets and stabilizes nonconducting channels state. It activates several potassium channels including Kv1.1/KCNA1, Kv1.2/KCNA2, and drosophila Shaker IR. It moderately to potently inhibits potassium channels including Kv1.3/KCNA3, Kv1.4/KCNA4, Kv1.5/KCNA5, Kv1.6/KCNA6, Kv2.1/KCNB1, Kv4.2/KCND2, Kv7.1/KCNQ1, Kv7.2/Kv7.3 (KCNQ2/KCNQ3), Kv7.4/KCNQ4, hERG/KCNH2, and C.elegans QKT1. On sodium channels, it moderately to potently inhibits Nav1.1/SCN1A, Nav1.2/SCN2A, Nav1.3/SCN3A, Nav1.4/SCN4A, Nav1.5/SCN5A, Nav1.6/SCN8A, Nav1.7/SCN9A, Nav1.8/SCN10A, and B.germanica BgNav. It also moderately to potently inhibits Cav3.1/CACNA1G, Cav3.2/CACNA1H, and Cav3.3/CACNA1I. Significant shifts in the voltage-current relationship are observed on Kv and Nav, depending on the channel isoform, whereas the toxin does not seem to modulate the voltage-sensor domains of Cav channels, acting mainly as a pore blocker. Does not activate nicotinic acetylcholine receptors (nAChR), but potentiates ACh-elicited current of human alpha-7/CHRNA7 nAChR. Is also able to bind T.californica muscle-type nAChRs. In vivo, causes an excitatory effect in mice behavior. Also shows antihyperalgesic and analgesic activity in the acid-induced muscle pain mice model, and weak anti-inflammatory effect in models of acute local inflammation. The sequence is that of Pi-stichotoxin-Hcr5b from Radianthus crispa (Leathery sea anemone).